A 77-amino-acid polypeptide reads, in one-letter code: Conotoxin King-Kong 2 (77 aa).

An N-terminal signal peptide occupies residues 1–22 (MKLTCMMIVAVLFLTAWTFVTA). A propeptide spanning residues 23-49 (DDSGNGLENLFSKAHHEMKNPEASNLN) is cleaved from the precursor. Cystine bridges form between Cys-52/Cys-67, Cys-59/Cys-71, and Cys-66/Cys-76. Residue Cys-76 is modified to Cysteine amide.

This sequence belongs to the conotoxin O1 superfamily. As to expression, expressed by the venom duct.

It is found in the secreted. This is Conotoxin King-Kong 2 from Conus textile (Cloth-of-gold cone).